An 802-amino-acid chain; its full sequence is Bifunctional purine biosynthetic protein ADE5,7 (802 aa).

The tract at residues 1 to 450 (MLNILVLGNG…QNSESSKVAI (450 aa)) is GARS. Residues 114 to 330 (KRFMSKHNIP…LAQVFLAAAE (217 aa)) form the ATP-grasp domain. 141 to 203 (QAHTDKAFVI…EQFLEGDEIS (63 aa)) is a binding site for ATP. Glu-298 and Asn-300 together coordinate Mg(2+). An AIRS region spans residues 451-802 (TYADSGVSVD…CVIENGTKLY (352 aa)). Phosphoserine is present on residues Ser-455 and Ser-458.

It in the N-terminal section; belongs to the GARS family. This sequence in the C-terminal section; belongs to the AIR synthase family. Requires Mg(2+) as cofactor. The cofactor is Mn(2+).

The protein localises to the cytoplasm. The catalysed reaction is 5-phospho-beta-D-ribosylamine + glycine + ATP = N(1)-(5-phospho-beta-D-ribosyl)glycinamide + ADP + phosphate + H(+). The enzyme catalyses 2-formamido-N(1)-(5-O-phospho-beta-D-ribosyl)acetamidine + ATP = 5-amino-1-(5-phospho-beta-D-ribosyl)imidazole + ADP + phosphate + H(+). The protein operates within purine metabolism; IMP biosynthesis via de novo pathway; 5-amino-1-(5-phospho-D-ribosyl)imidazole from N(2)-formyl-N(1)-(5-phospho-D-ribosyl)glycinamide: step 2/2. It participates in purine metabolism; IMP biosynthesis via de novo pathway; N(1)-(5-phospho-D-ribosyl)glycinamide from 5-phospho-alpha-D-ribose 1-diphosphate: step 2/2. In terms of biological role, catalyzes the second and fifth step in the 'de novo' purine biosynthesis pathway; contains phosphoribosylamine--glycine ligase (GARS) and phosphoribosylformylglycinamidine cyclo-ligase (AIRS) activities. This chain is Bifunctional purine biosynthetic protein ADE5,7, found in Saccharomyces cerevisiae (strain ATCC 204508 / S288c) (Baker's yeast).